Reading from the N-terminus, the 212-residue chain is Probable GH family 25 lysozyme 2 (212 aa).

A signal peptide spans 1–19; the sequence is MRFIALLISFFALLKVISA. The Ch-type lysozyme domain occupies 20–212; the sequence is ISGVDISSAS…GLGFDLNWYP (193 aa). Residues D24, D112, and E114 contribute to the active site.

Belongs to the glycosyl hydrolase 25 family.

The protein localises to the secreted. The catalysed reaction is Hydrolysis of (1-&gt;4)-beta-linkages between N-acetylmuramic acid and N-acetyl-D-glucosamine residues in a peptidoglycan and between N-acetyl-D-glucosamine residues in chitodextrins.. The protein is Probable GH family 25 lysozyme 2 of Dictyostelium discoideum (Social amoeba).